A 710-amino-acid polypeptide reads, in one-letter code: MRLSLSSQEMELVRKFLGREPKEEEWLVVDALWSEHCSYKSSKIFLRSFPSEGERVVMGIEDWQDAGALDVGDGWAVVLKLESHNHPSAIDPFNGAATGIGGIIRDIISKGARPIALLDMIRVGNLNNSRNRWLLKNIIAGIGFYGNSIGVPVVAGELAFDETYNDNPLVDVAGLGVVKKDKIVPSVVKEAGLKIVLVGLTGLDGLGGASFASRKLSGEDEIGAVQIADPFAGKIVLDVTLQIADKVEAIKDLGGGGLVVGITEMANGLGVEVELDKIPLRVKDLTPGEILVSETQERMVFAVKPERVKEVCEAFEYYEYPCAVIGEFTNDTSIRFLYKGKEVVNLPSSLLLNPPRYKWGVKKTKYSVYYEKPNINLEVAVKEILSYPDLVSKFWAYSQFDYEVGTSTVLKPGEADSGLISLPNGKLLAIKGDANPDLCAEDSYECGRYIVAEAYRNLATVGAKGIGVVDHLQFGDPKKPEVYYQFVEAVRGIAEASKYFGTPIVGGKVSFYNENKEGKPIKPTPLVVMAGLVQDKFLRPKITEGASIIMIGFTREEMGGSLLAKIFGNYGDVPKTRLNEELLSSELVIKAINDGKIIFAKDISKGGLVGALLPILVRGFGVSIDTNLIPSDTDDVISKLFSENGGRFIVLSEREDDINWLESQSRGIYVSKIGEVTREQYVMWLREGKKIDLTKEVNNYHRYLEEVTSD.

The active site involves H36. ATP-binding residues include Y39 and K80. Residue E82 participates in Mg(2+) binding. Substrate-binding positions include 83-86 (SHNH) and R105. H84 serves as the catalytic Proton acceptor. D106 is a binding site for Mg(2+). Q226 contributes to the substrate binding site. Residue D252 participates in Mg(2+) binding. 294-296 (ETQ) is a substrate binding site. ATP is bound by residues D470 and G507. S510 provides a ligand contact to substrate.

It belongs to the FGAMS family. In terms of assembly, monomer. Part of the FGAM synthase complex composed of 1 PurL, 1 PurQ and 2 PurS subunits.

The protein localises to the cytoplasm. It catalyses the reaction N(2)-formyl-N(1)-(5-phospho-beta-D-ribosyl)glycinamide + L-glutamine + ATP + H2O = 2-formamido-N(1)-(5-O-phospho-beta-D-ribosyl)acetamidine + L-glutamate + ADP + phosphate + H(+). It functions in the pathway purine metabolism; IMP biosynthesis via de novo pathway; 5-amino-1-(5-phospho-D-ribosyl)imidazole from N(2)-formyl-N(1)-(5-phospho-D-ribosyl)glycinamide: step 1/2. Functionally, part of the phosphoribosylformylglycinamidine synthase complex involved in the purines biosynthetic pathway. Catalyzes the ATP-dependent conversion of formylglycinamide ribonucleotide (FGAR) and glutamine to yield formylglycinamidine ribonucleotide (FGAM) and glutamate. The FGAM synthase complex is composed of three subunits. PurQ produces an ammonia molecule by converting glutamine to glutamate. PurL transfers the ammonia molecule to FGAR to form FGAM in an ATP-dependent manner. PurS interacts with PurQ and PurL and is thought to assist in the transfer of the ammonia molecule from PurQ to PurL. The protein is Phosphoribosylformylglycinamidine synthase subunit PurL of Sulfolobus acidocaldarius (strain ATCC 33909 / DSM 639 / JCM 8929 / NBRC 15157 / NCIMB 11770).